Reading from the N-terminus, the 554-residue chain is Phenylalanine--tRNA ligase beta subunit (554 aa).

Positions 276–351 constitute a B5 domain; sequence LTLKSRIISI…INYGYEKFEG (76 aa). Residues Asp-329, Asp-335, Glu-338, and Glu-339 each contribute to the Mg(2+) site.

This sequence belongs to the phenylalanyl-tRNA synthetase beta subunit family. Type 2 subfamily. As to quaternary structure, tetramer of two alpha and two beta subunits. It depends on Mg(2+) as a cofactor.

The protein resides in the cytoplasm. It catalyses the reaction tRNA(Phe) + L-phenylalanine + ATP = L-phenylalanyl-tRNA(Phe) + AMP + diphosphate + H(+). The protein is Phenylalanine--tRNA ligase beta subunit of Methanococcus maripaludis (strain C7 / ATCC BAA-1331).